The sequence spans 39 residues: MKVRPSVKTMCEHCKIIRRKGRVMVICSANPKHKQRQGK.

This sequence belongs to the bacterial ribosomal protein bL36 family.

This Pediococcus pentosaceus (strain ATCC 25745 / CCUG 21536 / LMG 10740 / 183-1w) protein is Large ribosomal subunit protein bL36.